Consider the following 450-residue polypeptide: Tubulin alpha chain (450 aa).

Positions 11, 71, 140, 144, 145, 179, 206, and 228 each coordinate GTP. Residue Glu-71 coordinates Mg(2+). Glu-254 is a catalytic residue.

The protein belongs to the tubulin family. As to quaternary structure, dimer of alpha and beta chains. A typical microtubule is a hollow water-filled tube with an outer diameter of 25 nm and an inner diameter of 15 nM. Alpha-beta heterodimers associate head-to-tail to form protofilaments running lengthwise along the microtubule wall with the beta-tubulin subunit facing the microtubule plus end conferring a structural polarity. Microtubules usually have 13 protofilaments but different protofilament numbers can be found in some organisms and specialized cells. It depends on Mg(2+) as a cofactor.

The protein resides in the cytoplasm. The protein localises to the cytoskeleton. It catalyses the reaction GTP + H2O = GDP + phosphate + H(+). Its function is as follows. Tubulin is the major constituent of microtubules, a cylinder consisting of laterally associated linear protofilaments composed of alpha- and beta-tubulin heterodimers. Microtubules grow by the addition of GTP-tubulin dimers to the microtubule end, where a stabilizing cap forms. Below the cap, tubulin dimers are in GDP-bound state, owing to GTPase activity of alpha-tubulin. This is Tubulin alpha chain from Zymoseptoria tritici (Speckled leaf blotch fungus).